Reading from the N-terminus, the 468-residue chain is MKLPEKLGPIHFIGIGGIGMSGIAEVMANLGYTVQGSDANDNANVRRLAENGIRTFVGHRAENVENAALVVVSTAIRRDNPELIEARERRLPVVRRAEMLAELMRFKSCVAVAGTHGKTTTTSLVATLLDAGNLDPTVINGGIINAYGTNARMGAGDWMVVEADESDGTFLKLPADVAIVTNIDPEHLDHFGSFEAIKDAFRRFIDNIPFYGFAVMCIDHPIVQDLVGHIEDRRIITYGENPQADVRLIDIDLKGGQSRFRVMIRDRRPGFRMEIEDLVLPMPGRHNALNATAALAVAHELGVPSDAIRKALAGFGGVKRRFTRTGEWNGATIFDDYGHHPVEIQAVLRAARASTDGRVIAIVQPHRYTRLQSLFEDFCTCFNDADTVIVAPVYAAGEAPIEGIDRDSLIAGLKARGHRDAVALERPEDLARLVAGRAGSNDYVVCLGAGTITQWAYALPGELAALQG.

114 to 120 (GTHGKTT) is an ATP binding site.

The protein belongs to the MurCDEF family.

The protein resides in the cytoplasm. The catalysed reaction is UDP-N-acetyl-alpha-D-muramate + L-alanine + ATP = UDP-N-acetyl-alpha-D-muramoyl-L-alanine + ADP + phosphate + H(+). It participates in cell wall biogenesis; peptidoglycan biosynthesis. In terms of biological role, cell wall formation. The protein is UDP-N-acetylmuramate--L-alanine ligase of Methylorubrum extorquens (strain PA1) (Methylobacterium extorquens).